We begin with the raw amino-acid sequence, 352 residues long: MATQMVKGNTAVIIGAMYAGCDCYFGYPITPASEILHEASRYFPMVGRKFVQAESEEAAINMVYGAAAAGHRVMTASSGPGISLKQEGISFLAGAELPAVIVDVMRAGPGLGNIGPEQGDYNQIVKGGGHGNYRNMVLAPSSVQEMCDLTMEAFELADKYRNPVVVLTDAVLGQMAEPLRFPEEAVEHRPDTSWAVCGNRETMKNLVTSIFLDFDELEEFNFYLQEKYARIEENEVRYEEYLVDDAEIVMVAYGISSRVARSAVETARAEGINVGLLRPITLFPFPSDRIRELADGGCRFISVEMSSGQMREDIRMASGCRDVELVNRMGGNLIELRDVLEKIREVAGDSSD.

In terms of assembly, heterotrimer of the VorA, VorB and VorC subunits.

It catalyses the reaction 3-methyl-2-oxobutanoate + 2 oxidized [2Fe-2S]-[ferredoxin] + CoA = 2-methylpropanoyl-CoA + 2 reduced [2Fe-2S]-[ferredoxin] + CO2 + H(+). The protein is Ketoisovalerate oxidoreductase subunit VorB (vorB) of Methanothermobacter thermautotrophicus (strain ATCC 29096 / DSM 1053 / JCM 10044 / NBRC 100330 / Delta H) (Methanobacterium thermoautotrophicum).